We begin with the raw amino-acid sequence, 436 residues long: Platelet-activating factor acetylhydrolase (436 aa).

A signal peptide spans M1–P21. N-linked (GlcNAc...) asparagine glycosylation is found at N76 and N200. The active-site Nucleophile is S271. Catalysis depends on D294, which acts as the Charge relay system. N-linked (GlcNAc...) asparagine glycosylation is present at N324. H349 serves as the catalytic Charge relay system.

Belongs to the AB hydrolase superfamily. Lipase family. In terms of processing, N-glycosylated. As to expression, plasma.

It localises to the secreted. The protein resides in the extracellular space. It carries out the reaction a 1-O-alkyl-2-acetyl-sn-glycero-3-phosphocholine + H2O = a 1-O-alkyl-sn-glycero-3-phosphocholine + acetate + H(+). It catalyses the reaction 1-O-decyl-2-acetyl-sn-glycero-3-phosphocholine + H2O = 1-O-decyl-sn-glycero-3-phosphocholine + acetate + H(+). The enzyme catalyses 1-O-dodecyl-2-acetyl-sn-glycero-3-phosphocholine + H2O = 1-O-dodecyl-sn-glycero-3-phosphocholine + acetate + H(+). The catalysed reaction is 1-O-tetradecyl-2-acetyl-sn-glycero-3-phosphocholine + H2O = 1-O-tetradecyl-sn-glycero-3-phosphocholine + acetate + H(+). It carries out the reaction 1-O-hexadecyl-2-acetyl-sn-glycero-3-phosphocholine + H2O = 1-O-hexadecyl-sn-glycero-3-phosphocholine + acetate + H(+). It catalyses the reaction 1-O-octadecyl-2-acetyl-sn-glycero-3-phosphocholine + H2O = 1-O-octadecyl-sn-glycero-3-phosphocholine + acetate + H(+). The enzyme catalyses 1-hexadecanoyl-2-acetyl-sn-glycero-3-phosphocholine + H2O = 1-hexadecanoyl-sn-glycero-3-phosphocholine + acetate + H(+). The catalysed reaction is 1-hexadecanoyl-2-propionyl-sn-glycero-3-phosphocholine + H2O = propanoate + 1-hexadecanoyl-sn-glycero-3-phosphocholine + H(+). It carries out the reaction 1-hexadecanoyl-2-butanoyl-sn-glycero-3-phosphocholine + H2O = butanoate + 1-hexadecanoyl-sn-glycero-3-phosphocholine + H(+). It catalyses the reaction 1-hexadecanoyl-2-pentanoyl-sn-glycero-3-phosphocholine + H2O = pentanoate + 1-hexadecanoyl-sn-glycero-3-phosphocholine + H(+). The enzyme catalyses 1-hexadecanoyl-2-glutaroyl-sn-glycero-3-phosphocholine + H2O = glutarate + 1-hexadecanoyl-sn-glycero-3-phosphocholine + H(+). The catalysed reaction is 1-hexadecanoyl-2-(5-oxopentanoyl)-sn-glycero-3-phosphocholine + H2O = 5-oxopentanoate + 1-hexadecanoyl-sn-glycero-3-phosphocholine + H(+). It carries out the reaction 1-hexadecanoyl-2-(9-oxononanoyl)-sn-glycero-3-phosphocholine + H2O = 9-oxononanoate + 1-hexadecanoyl-sn-glycero-3-phosphocholine + H(+). It catalyses the reaction 1-hexadecanoyl-2-[9-hydroperoxy-(10E-octadecenoyl)]-sn-glycero-3-phosphocholine + H2O = 9-hydroperoxy-10E-octadecenoate + 1-hexadecanoyl-sn-glycero-3-phosphocholine + H(+). The enzyme catalyses 1-hexadecanoyl-2-(10-hydroperoxy-8E-octadecenoyl)-sn-glycero-3-phosphocholine + H2O = 10-hydroperoxy-(8E)-octadecenoate + 1-hexadecanoyl-sn-glycero-3-phosphocholine + H(+). Its function is as follows. Lipoprotein-associated calcium-independent phospholipase A2 involved in phospholipid catabolism during inflammatory and oxidative stress response. At the lipid-aqueous interface, hydrolyzes the ester bond of fatty acyl group attached at sn-2 position of phospholipids (phospholipase A2 activity). Specifically targets phospholipids with a short-chain fatty acyl group at sn-2 position. Can hydrolyze phospholipids with long fatty acyl chains, only if they carry oxidized functional groups. Hydrolyzes and inactivates platelet-activating factor (PAF, 1-O-alkyl-2-acetyl-sn-glycero-3-phosphocholine), a potent pro-inflammatory signaling lipid that acts through PTAFR on various innate immune cells. Hydrolyzes oxidatively truncated phospholipids carrying an aldehyde group at omega position, preventing their accumulation in lipoprotein particles and uncontrolled pro-inflammatory effects. As part of high-density lipoprotein (HDL) particles, can hydrolyze phospholipids having long-chain fatty acyl hydroperoxides at sn-2 position and protect against potential accumulation of these oxylipins in the vascular wall. Catalyzes the release from membrane phospholipids of F2-isoprostanes, lipid biomarkers of cellular oxidative damage. The chain is Platelet-activating factor acetylhydrolase (PLA2G7) from Cavia porcellus (Guinea pig).